A 274-amino-acid polypeptide reads, in one-letter code: MYNSSNIIDYVIDAWEKLQEQAPLVQCITNSVAANYAANVLLAAGASPAMIDNPFEARSFTEISGALSINVGTPTTEQIQAMQISAKTAHEHDIPWVLDPVGYGPILKWRSDMVDELLQYHPSVIRGNASEIGALAGSLVQSKGVDSTLKSDEMFQLAHNLLTKTSCVAISGETDYILSNAMTCIVKVRGGSHLQPKITATGCALGTLIAAYCAVAPVHLATIAAHIHFAIAGKLAYDQAQTIGSFNTMFMDYIHMMDANLIEQYACIELISDD.

Met50 lines the substrate pocket. 2 residues coordinate ATP: Arg126 and Ser171. Ala200 provides a ligand contact to substrate.

This sequence belongs to the Thz kinase family. The cofactor is Mg(2+).

The enzyme catalyses 5-(2-hydroxyethyl)-4-methylthiazole + ATP = 4-methyl-5-(2-phosphooxyethyl)-thiazole + ADP + H(+). The protein operates within cofactor biosynthesis; thiamine diphosphate biosynthesis; 4-methyl-5-(2-phosphoethyl)-thiazole from 5-(2-hydroxyethyl)-4-methylthiazole: step 1/1. Catalyzes the phosphorylation of the hydroxyl group of 4-methyl-5-beta-hydroxyethylthiazole (THZ). The chain is Hydroxyethylthiazole kinase from Acinetobacter baylyi (strain ATCC 33305 / BD413 / ADP1).